The following is a 187-amino-acid chain: Cytokinin riboside 5'-monophosphate phosphoribohydrolase (187 aa).

Lysine 74 participates in a covalent cross-link: Isoglutamyl lysine isopeptide (Lys-Gln) (interchain with Q-Cter in protein Pup). Residues glutamate 80, 98–99 (RK), 115–121 (GVGTLDE), and threonine 127 contribute to the substrate site.

It belongs to the LOG family. Homodimer. In terms of processing, pupylated at Lys-74 by the prokaryotic ubiquitin-like protein Pup, which leads to its degradation by the proteasome. The proteasomal control of cytokinin synthesis is essential to protect M.tuberculosis against host-produced NO.

It carries out the reaction N(6)-(dimethylallyl)adenosine 5'-phosphate + H2O = N(6)-dimethylallyladenine + D-ribose 5-phosphate. The catalysed reaction is 9-ribosyl-trans-zeatin 5'-phosphate + H2O = trans-zeatin + D-ribose 5-phosphate. Catalyzes the hydrolytic removal of ribose 5'-monophosphate from nitrogen N6-modified adenosines, the final step of bioactive cytokinin synthesis. Is involved in the synthesis of isopentenyladenine (iP) and 2-methylthio-iP (2MeS-iP), the most abundant cytokinins detected in M.tuberculosis lysates and supernatants. Is also able to convert trans-zeatin-riboside monophosphate (tZRMP) to trans-zeatin (tZ) in vitro; however, it may not be involved in the biosynthesis of this minor cytokinin in vivo. Accumulation of Rv1205 sensitizes M.tuberculosis to nitric oxide since cytokinin breakdown products synergize with NO to kill M.tuberculosis. Shows a slow AMP hydrolase activity, but is not able to hydrolyze ATP. Displays no lysine decarboxylase (LDC) activity (L-lysine conversion to cadaverine). The polypeptide is Cytokinin riboside 5'-monophosphate phosphoribohydrolase (Mycobacterium tuberculosis (strain ATCC 25618 / H37Rv)).